Here is a 1390-residue protein sequence, read N- to C-terminus: DNA-directed RNA polymerase subunit beta (1390 aa).

Belongs to the RNA polymerase beta chain family. The RNAP catalytic core consists of 2 alpha, 1 beta, 1 beta' and 1 omega subunit. When a sigma factor is associated with the core the holoenzyme is formed, which can initiate transcription.

The catalysed reaction is RNA(n) + a ribonucleoside 5'-triphosphate = RNA(n+1) + diphosphate. In terms of biological role, DNA-dependent RNA polymerase catalyzes the transcription of DNA into RNA using the four ribonucleoside triphosphates as substrates. This Chromobacterium violaceum (strain ATCC 12472 / DSM 30191 / JCM 1249 / CCUG 213 / NBRC 12614 / NCIMB 9131 / NCTC 9757 / MK) protein is DNA-directed RNA polymerase subunit beta.